A 525-amino-acid chain; its full sequence is GMP synthase [glutamine-hydrolyzing] (525 aa).

One can recognise a Glutamine amidotransferase type-1 domain in the interval 8-207 (KILILDFGSQ…ALDICGCAAN (200 aa)). Cys-85 serves as the catalytic Nucleophile. Catalysis depends on residues His-181 and Glu-183. A GMPS ATP-PPase domain is found at 208 to 400 (WKPSSIIEDA…LGLPYNMLYR (193 aa)). Residue 235–241 (SGGVDSS) participates in ATP binding.

In terms of assembly, homodimer.

It catalyses the reaction XMP + L-glutamine + ATP + H2O = GMP + L-glutamate + AMP + diphosphate + 2 H(+). It functions in the pathway purine metabolism; GMP biosynthesis; GMP from XMP (L-Gln route): step 1/1. Its function is as follows. Catalyzes the synthesis of GMP from XMP. The chain is GMP synthase [glutamine-hydrolyzing] from Shewanella putrefaciens (strain CN-32 / ATCC BAA-453).